The sequence spans 352 residues: S-adenosylmethionine:tRNA ribosyltransferase-isomerase (352 aa).

It belongs to the QueA family. Monomer.

The protein resides in the cytoplasm. It carries out the reaction 7-aminomethyl-7-carbaguanosine(34) in tRNA + S-adenosyl-L-methionine = epoxyqueuosine(34) in tRNA + adenine + L-methionine + 2 H(+). Its pathway is tRNA modification; tRNA-queuosine biosynthesis. Its function is as follows. Transfers and isomerizes the ribose moiety from AdoMet to the 7-aminomethyl group of 7-deazaguanine (preQ1-tRNA) to give epoxyqueuosine (oQ-tRNA). The protein is S-adenosylmethionine:tRNA ribosyltransferase-isomerase of Cupriavidus necator (strain ATCC 17699 / DSM 428 / KCTC 22496 / NCIMB 10442 / H16 / Stanier 337) (Ralstonia eutropha).